The sequence spans 424 residues: Elongation factor 1-alpha (424 aa).

The tr-type G domain maps to 5–223 (KPHLNLITIG…DAFKVPEKPI (219 aa)). Residues 14 to 21 (GHVDHGKS) are G1. 14–21 (GHVDHGKS) lines the GTP pocket. S21 provides a ligand contact to Mg(2+). The interval 70-74 (GVTID) is G2. The interval 91–94 (DAPG) is G3. Residues 91-95 (DAPGH) and 148-151 (NKMD) contribute to the GTP site. The G4 stretch occupies residues 148–151 (NKMD). The segment at 187-189 (SGY) is G5.

This sequence belongs to the TRAFAC class translation factor GTPase superfamily. Classic translation factor GTPase family. EF-Tu/EF-1A subfamily.

Its subcellular location is the cytoplasm. It carries out the reaction GTP + H2O = GDP + phosphate + H(+). Its function is as follows. GTP hydrolase that promotes the GTP-dependent binding of aminoacyl-tRNA to the A-site of ribosomes during protein biosynthesis. In Thermoplasma acidophilum (strain ATCC 25905 / DSM 1728 / JCM 9062 / NBRC 15155 / AMRC-C165), this protein is Elongation factor 1-alpha.